The following is a 632-amino-acid chain: ATP-dependent zinc metalloprotease FtsH (632 aa).

Residues 1–9 (MKPTNEPKK) are Cytoplasmic-facing. Residues 10-30 (PFFQSPIILAVLGGILLIFFL) form a helical membrane-spanning segment. Topologically, residues 31 to 116 (RSFNSDGSFS…INYSGFSESN (86 aa)) are periplasmic. The helical transmembrane segment at 117-137 (FFTDMLGWLMPILVILGLWMF) threads the bilayer. Residues 138 to 632 (MANRMQKNMG…RLIPLEEQAS (495 aa)) are Cytoplasmic-facing. ATP-binding positions include Ala-173, 213-217 (GTGKT), and His-354. Position 434 (His-434) interacts with Zn(2+). Glu-435 is an active-site residue. Zn(2+)-binding residues include His-438 and Asp-511.

It in the central section; belongs to the AAA ATPase family. In the C-terminal section; belongs to the peptidase M41 family. As to quaternary structure, homohexamer. It depends on Zn(2+) as a cofactor.

It localises to the cell inner membrane. Its function is as follows. Acts as a processive, ATP-dependent zinc metallopeptidase for both cytoplasmic and membrane proteins. Plays a role in the quality control of integral membrane proteins. The chain is ATP-dependent zinc metalloprotease FtsH from Helicobacter pylori (strain ATCC 700392 / 26695) (Campylobacter pylori).